A 109-amino-acid chain; its full sequence is Flagellar hook-basal body complex protein FliE (109 aa).

The protein belongs to the FliE family.

The protein localises to the bacterial flagellum basal body. This is Flagellar hook-basal body complex protein FliE from Stutzerimonas stutzeri (strain A1501) (Pseudomonas stutzeri).